A 295-amino-acid chain; its full sequence is Ribosomal RNA small subunit methyltransferase A (295 aa).

Asn33, Val35, Gly60, Glu81, Asp111, and Asn129 together coordinate S-adenosyl-L-methionine.

It belongs to the class I-like SAM-binding methyltransferase superfamily. rRNA adenine N(6)-methyltransferase family. RsmA subfamily.

The protein resides in the cytoplasm. The catalysed reaction is adenosine(1518)/adenosine(1519) in 16S rRNA + 4 S-adenosyl-L-methionine = N(6)-dimethyladenosine(1518)/N(6)-dimethyladenosine(1519) in 16S rRNA + 4 S-adenosyl-L-homocysteine + 4 H(+). In terms of biological role, specifically dimethylates two adjacent adenosines (A1518 and A1519) in the loop of a conserved hairpin near the 3'-end of 16S rRNA in the 30S particle. May play a critical role in biogenesis of 30S subunits. The sequence is that of Ribosomal RNA small subunit methyltransferase A from Corynebacterium diphtheriae (strain ATCC 700971 / NCTC 13129 / Biotype gravis).